The sequence spans 397 residues: MWWFGGNPSPSDYPNAAIPNFNMHAFVIFSVFLIPLIAYILILPGVRRKRVVTTVTYVLMLAVGGALIASLIYPCWASGSQMIYTQFRGHSNERILAKIGVEIGLQKVNVTLKFERLLSSNDVLPGSDMTELYYNEGFDISGISSMAEALHHGLENGLPYPMLSVLEYFSLNQDSFDWGRHYRVAGHYTHAAIWFAFACWCLSVVLMLFLPHNAYKSILATGISCLIACLVYLLLSPCELRIAFTGENFERVDLTATFSFCFYLIFAIGILCVLCGLGLGICEHWRIYTLSTFLDASLDEHVGPKWKKLPTGGPALQGVQIGAYGTNTTNSSRDKNDISSDKTAGSSGFQSRTSTCQSSASSASLRSQSSIETVHDEAELERTHVHFLQEPCSSSST.

2 helical membrane passes run phenylalanine 26–valine 46 and tyrosine 57–alanine 77. N-linked (GlcNAc...) asparagine glycosylation is present at asparagine 109. A run of 3 helical transmembrane segments spans residues alanine 191 to proline 211, isoleucine 218 to cysteine 238, and cysteine 261 to isoleucine 281. Positions tyrosine 324 to aspartate 376 are disordered. 2 N-linked (GlcNAc...) asparagine glycosylation sites follow: asparagine 327 and asparagine 330. Residues aspartate 341–glutamine 350 are compositionally biased toward polar residues. A compositionally biased stretch (low complexity) spans serine 351–serine 370.

The protein belongs to the DUOXA family. As to quaternary structure, interacts with bli-3 and tsp-15. Interacts with csnk-1. As to expression, expressed in the hypodermis, specifically in seam cells, the terminal bulb of the pharynx, the distal region of the gonadal arm, vulva, spermatheca and uterus.

It localises to the membrane. Its function is as follows. Plays a role in cuticle biogenesis. In complex with tsp-15 and the dual oxidase bli-3, promotes the generation of reactive oxygen species (ROS) and tyrosine cross-linking of collagen, thus stabilizing cuticular extracellular matrix. The chain is Dual oxidase maturation factor 1 from Caenorhabditis elegans.